The following is a 406-amino-acid chain: MKKVHERFLEYVKVDTKSDETTRVTPSTKGQLELGKILAEELKKIGVDEVRISDKGYVYACLKSNCDKDIPKIGFISHMDTAPDMSGKNVNPKIVENYDGKDIELGNGYTLSPSFSPELPMYKGQTLITTDGTTLLGADDKAGVAEIITAIEYLINHPEIKHGDIKIGFTPDEEIGEGADHFDVEGFGADFAYTLDGGRIGELEYENFNAASAKVEIIGKNVHPGSAKGKMINSILVAHEFVSMLPLNEVPEKTEGYEGFSFLLDIQGEVEKTSLSFIIRDFDKEGFKNRKERFNEIANELNKKYGEGTVTVTLKDQYMNMKEMIEPRMHIVETAEKAMKQCGIEPIKKPIRGGTDGARLSFMGLPTPNIFTGGENFHGRYEYISVNSMEKAVEVILNIIKIYAEK.

His78 contacts Zn(2+). Residue Asp80 is part of the active site. Asp139 lines the Zn(2+) pocket. Glu173 functions as the Proton acceptor in the catalytic mechanism. Positions 174, 196, and 378 each coordinate Zn(2+).

The protein belongs to the peptidase M20B family. Zn(2+) serves as cofactor.

Its subcellular location is the cytoplasm. The enzyme catalyses Release of the N-terminal residue from a tripeptide.. Functionally, cleaves the N-terminal amino acid of tripeptides. The protein is Peptidase T of Clostridium perfringens (strain SM101 / Type A).